The primary structure comprises 452 residues: Neuromedin-K receptor (452 aa).

The Extracellular portion of the chain corresponds to 1–71 (MASVPRGENW…TNQFVQPSWR (71 aa)). N9, N23, N40, and N60 each carry an N-linked (GlcNAc...) asparagine glycan. Residues 72 to 94 (IALWSLAYGLVVAVAVFGNLIVI) traverse the membrane as a helical segment. Topologically, residues 95–104 (WIILAHKRMR) are cytoplasmic. A helical transmembrane segment spans residues 105-126 (TVTNYFLVNLAFSDASVAAFNT). Residues 127–146 (LINFIYGLHSEWYFGANYCR) are Extracellular-facing. C145 and C220 are oxidised to a cystine. The helical transmembrane segment at 147-168 (FQNFFPITAVFASIYSMTAIAV) threads the bilayer. The Cytoplasmic segment spans residues 169–188 (DRYMAIIDPLKPRLSATATK). A helical membrane pass occupies residues 189–209 (IVIGSIWILAFLLAFPQCLYS). Topologically, residues 210-232 (KIKVMPGRTLCYVQWPEGPKQHF) are extracellular. A helical transmembrane segment spans residues 233 to 257 (TYHIIVIILVYCFPLLIMGVTYTIV). The Cytoplasmic segment spans residues 258–286 (GITLWGGEIPGDTCDKYHEQLKAKRKVVK). A helical transmembrane segment spans residues 287 to 308 (MMIIVVVTFAICWLPYHVYFIL). Topologically, residues 309–321 (TAIYQQLNRWKYI) are extracellular. The chain crosses the membrane as a helical span at residues 322-346 (QQVYLASFWLAMSSTMYNPIIYCCL). The Cytoplasmic segment spans residues 347-452 (NKRFRAGFKR…SPYTSVDEYS (106 aa)). Residue C361 is the site of S-palmitoyl cysteine attachment. Positions 400-452 (FDPNDGDPTKSSRKKRAVPRDPSANGCSHRGSKSASTTSSFISSPYTSVDEYS) are disordered. Over residues 432-452 (KSASTTSSFISSPYTSVDEYS) the composition is skewed to low complexity.

This sequence belongs to the G-protein coupled receptor 1 family. In terms of processing, the anchoring of this receptor to the plasma membrane is probably mediated by the palmitoylation of a cysteine residue.

Its subcellular location is the cell membrane. In terms of biological role, this is a receptor for the tachykinin neuropeptide neuromedin-K (neurokinin B). It is associated with G proteins that activate a phosphatidylinositol-calcium second messenger system. The rank order of affinity of this receptor to tachykinins is: neuromedin-K &gt; substance K &gt; substance P. This is Neuromedin-K receptor (Tacr3) from Rattus norvegicus (Rat).